Consider the following 58-residue polypeptide: Large ribosomal subunit protein uL30 (58 aa).

It belongs to the universal ribosomal protein uL30 family. Part of the 50S ribosomal subunit.

The sequence is that of Large ribosomal subunit protein uL30 from Acinetobacter baylyi (strain ATCC 33305 / BD413 / ADP1).